A 179-amino-acid chain; its full sequence is Large ribosomal subunit protein uL6 (179 aa).

Belongs to the universal ribosomal protein uL6 family. In terms of assembly, part of the 50S ribosomal subunit.

This protein binds to the 23S rRNA, and is important in its secondary structure. It is located near the subunit interface in the base of the L7/L12 stalk, and near the tRNA binding site of the peptidyltransferase center. In Beutenbergia cavernae (strain ATCC BAA-8 / DSM 12333 / CCUG 43141 / JCM 11478 / NBRC 16432 / NCIMB 13614 / HKI 0122), this protein is Large ribosomal subunit protein uL6.